A 238-amino-acid polypeptide reads, in one-letter code: Expansin-like protein 5 (238 aa).

Positions 1-21 (MRINFKLILIILTSFYGIINC) are cleaved as a signal peptide. The region spanning 45–145 (NGNCGFGKLT…VKVPCRVSGN (101 aa)) is the Expansin-like EG45 domain. 2 disulfide bridges follow: Cys-48–Cys-78 and Cys-81–Cys-140. Asn-89 carries an N-linked (GlcNAc...) asparagine glycan.

The protein belongs to the expansin family. Expansin A subfamily.

The protein resides in the secreted. Its function is as follows. May serve to lubricate the movement of the cellulose microfibrils during cell growth and wall extension and/or may serve to maintain the fluid state of the slug cell wall. The protein is Expansin-like protein 5 (expl5) of Dictyostelium discoideum (Social amoeba).